Here is a 364-residue protein sequence, read N- to C-terminus: Probable dual-specificity RNA methyltransferase RlmN (364 aa).

The Proton acceptor role is filled by Glu106. The region spanning 112 to 350 is the Radical SAM core domain; it reads YPQRNTVCIS…SCTVRDTRGR (239 aa). Cysteines 119 and 356 form a disulfide. Cys126, Cys130, and Cys133 together coordinate [4Fe-4S] cluster. Residues 177 to 178, Ser211, 234 to 236, and Asn313 each bind S-adenosyl-L-methionine; these read GE and SLH. Cys356 functions as the S-methylcysteine intermediate in the catalytic mechanism.

The protein belongs to the radical SAM superfamily. RlmN family. The cofactor is [4Fe-4S] cluster.

It localises to the cytoplasm. The catalysed reaction is adenosine(2503) in 23S rRNA + 2 reduced [2Fe-2S]-[ferredoxin] + 2 S-adenosyl-L-methionine = 2-methyladenosine(2503) in 23S rRNA + 5'-deoxyadenosine + L-methionine + 2 oxidized [2Fe-2S]-[ferredoxin] + S-adenosyl-L-homocysteine. The enzyme catalyses adenosine(37) in tRNA + 2 reduced [2Fe-2S]-[ferredoxin] + 2 S-adenosyl-L-methionine = 2-methyladenosine(37) in tRNA + 5'-deoxyadenosine + L-methionine + 2 oxidized [2Fe-2S]-[ferredoxin] + S-adenosyl-L-homocysteine. In terms of biological role, specifically methylates position 2 of adenine 2503 in 23S rRNA and position 2 of adenine 37 in tRNAs. The sequence is that of Probable dual-specificity RNA methyltransferase RlmN from Mycobacterium ulcerans (strain Agy99).